Reading from the N-terminus, the 150-residue chain is Globin-1 (150 aa).

Positions proline 11–tyrosine 150 constitute a Globin domain. Residues histidine 74 and histidine 106 each coordinate heme b.

The protein belongs to the globin family. Monomer.

This chain is Globin-1, found in Mordacia mordax (Southern hemisphere lamprey).